A 229-amino-acid polypeptide reads, in one-letter code: Uracil-DNA glycosylase (229 aa).

Catalysis depends on aspartate 64, which acts as the Proton acceptor.

It belongs to the uracil-DNA glycosylase (UDG) superfamily. UNG family.

It is found in the cytoplasm. It carries out the reaction Hydrolyzes single-stranded DNA or mismatched double-stranded DNA and polynucleotides, releasing free uracil.. Functionally, excises uracil residues from the DNA which can arise as a result of misincorporation of dUMP residues by DNA polymerase or due to deamination of cytosine. This is Uracil-DNA glycosylase from Salmonella arizonae (strain ATCC BAA-731 / CDC346-86 / RSK2980).